Reading from the N-terminus, the 65-residue chain is MSTKLKGPDGRIPDRLPDGSPAVSWERRWTEGSLPLWLVATVGGMAVLSVLGLFFFGSFTGVGSA.

Over residues 1-17 (MSTKLKGPDGRIPDRLP) the composition is skewed to basic and acidic residues. The segment at 1–21 (MSTKLKGPDGRIPDRLPDGSP) is disordered. A helical membrane pass occupies residues 36-56 (LWLVATVGGMAVLSVLGLFFF).

The protein belongs to the PsbJ family. As to quaternary structure, PSII is composed of 1 copy each of membrane proteins PsbA, PsbB, PsbC, PsbD, PsbE, PsbF, PsbH, PsbI, PsbJ, PsbK, PsbL, PsbM, PsbT, PsbX, PsbY, Psb30/Ycf12, peripheral proteins PsbO, CyanoQ (PsbQ), PsbU, PsbV and a large number of cofactors. It forms dimeric complexes.

The protein localises to the cellular thylakoid membrane. Functionally, one of the components of the core complex of photosystem II (PSII). PSII is a light-driven water:plastoquinone oxidoreductase that uses light energy to abstract electrons from H(2)O, generating O(2) and a proton gradient subsequently used for ATP formation. It consists of a core antenna complex that captures photons, and an electron transfer chain that converts photonic excitation into a charge separation. The protein is Photosystem II reaction center protein J of Prochlorococcus marinus (strain MIT 9313).